We begin with the raw amino-acid sequence, 347 residues long: uncharacterized protein (347 aa).

Positions 207, 218, 279, 312, and 326 each coordinate Mn(2+).

The protein belongs to the peptidase M24B family. Mn(2+) is required as a cofactor.

This is an uncharacterized protein from Methanocaldococcus jannaschii (strain ATCC 43067 / DSM 2661 / JAL-1 / JCM 10045 / NBRC 100440) (Methanococcus jannaschii).